A 516-amino-acid chain; its full sequence is Facilitated glucose transporter homolog (516 aa).

Positions 1–37 (MNAVVASQNKNDRSFSNMESESSSNVEKSEKENHHQS) are disordered. Residues 1–47 (MNAVVASQNKNDRSFSNMESESSSNVEKSEKENHHQSLPDENWTPFL) are Cytoplasmic-facing. Over residues 14–26 (SFSNMESESSSNV) the composition is skewed to low complexity. Residues 27 to 37 (EKSEKENHHQS) are compositionally biased toward basic and acidic residues. A helical membrane pass occupies residues 48–68 (FFCISSIALASFQDGFQIGCI). The Extracellular segment spans residues 69–101 (NAPGPLIIDWIKKCHFELFGEVLSQYQADFIWS). A helical transmembrane segment spans residues 102–122 (VAVSMFSVGGMFGSFCSGFLA). The Cytoplasmic portion of the chain corresponds to 123-138 (DKFGRKSTLLYNNILA). A helical transmembrane segment spans residues 139 to 159 (LLAAVCLSTSKLFNFYPMIVF). Residues 160–161 (GR) lie on the Extracellular side of the membrane. Residues 162–182 (FLVGLNCGITSGLVPMFLTEL) form a helical membrane-spanning segment. Residues 183–200 (APANLRGKCGSFHQLNIS) are Cytoplasmic-facing. A helical membrane pass occupies residues 201–221 (VAIVLSQALGLPQIFGTQVGW). Residue Pro222 is a topological domain, extracellular. The helical transmembrane segment at 223–243 (YIFACVAIPTFLQLATIPFCV) threads the bilayer. Residues 244-306 (ESPKYLISKL…SLFKGDNQWP (63 aa)) lie on the Cytoplasmic side of the membrane. The helical transmembrane segment at 307–327 (MIVSILMMFSQQFSGISAVTF) threads the bilayer. Residues 328 to 344 (YSTLIFKRNGLSGNEPM) are Extracellular-facing. Residues 345-365 (YATVGFGCIKLIATFGCLFLI) traverse the membrane as a helical segment. Over 366-376 (DHPKFGRKRLH) the chain is Cytoplasmic. A helical transmembrane segment spans residues 377-397 (IAGLSGMCISSILIVITLTLS). Residues 398–409 (NAGYHWASYMNV) lie on the Extracellular side of the membrane. The helical transmembrane segment at 410–430 (LFILSFVVTFAFGPGPIPWFF) threads the bilayer. Residues 431-444 (TSELFDSATRGRAA) lie on the Cytoplasmic side of the membrane. A helical membrane pass occupies residues 445–465 (AVSATSNWVANWMVGLTFLPI). Residues 466–471 (NNIIHQ) lie on the Extracellular side of the membrane. The helical transmembrane segment at 472–492 (YAFLMFTFFTFTFAIFTWKFV) threads the bilayer. Topologically, residues 493–516 (PETKGKSPSAIRKELAFMRKRICS) are cytoplasmic.

The protein belongs to the major facilitator superfamily. Sugar transporter (TC 2.A.1.1) family. In terms of tissue distribution, expressed in seam cells from the early embryonic stage through the L2 stage (at protein level).

It localises to the cell membrane. Its function is as follows. Appears to have no transport activity for glucose. The sequence is that of Facilitated glucose transporter homolog from Caenorhabditis elegans.